Reading from the N-terminus, the 483-residue chain is Protein nucleotidyltransferase YdiU (483 aa).

The ATP site is built by Gly87, Gly89, Arg90, Lys110, Asp122, Gly123, Arg173, and Arg180. Asp249 acts as the Proton acceptor in catalysis. Residues Asn250 and Asp259 each coordinate Mg(2+). Residue Asp259 participates in ATP binding.

Belongs to the SELO family. Mg(2+) serves as cofactor. The cofactor is Mn(2+).

The enzyme catalyses L-seryl-[protein] + ATP = 3-O-(5'-adenylyl)-L-seryl-[protein] + diphosphate. It catalyses the reaction L-threonyl-[protein] + ATP = 3-O-(5'-adenylyl)-L-threonyl-[protein] + diphosphate. It carries out the reaction L-tyrosyl-[protein] + ATP = O-(5'-adenylyl)-L-tyrosyl-[protein] + diphosphate. The catalysed reaction is L-histidyl-[protein] + UTP = N(tele)-(5'-uridylyl)-L-histidyl-[protein] + diphosphate. The enzyme catalyses L-seryl-[protein] + UTP = O-(5'-uridylyl)-L-seryl-[protein] + diphosphate. It catalyses the reaction L-tyrosyl-[protein] + UTP = O-(5'-uridylyl)-L-tyrosyl-[protein] + diphosphate. In terms of biological role, nucleotidyltransferase involved in the post-translational modification of proteins. It can catalyze the addition of adenosine monophosphate (AMP) or uridine monophosphate (UMP) to a protein, resulting in modifications known as AMPylation and UMPylation. This Pectobacterium atrosepticum (strain SCRI 1043 / ATCC BAA-672) (Erwinia carotovora subsp. atroseptica) protein is Protein nucleotidyltransferase YdiU.